Reading from the N-terminus, the 201-residue chain is ATP-dependent dethiobiotin synthetase BioD (201 aa).

Position 11 to 16 (11 to 16 (DVGKTH)) interacts with ATP. Position 15 (Thr-15) interacts with Mg(2+). Residue Lys-31 is part of the active site. ATP-binding positions include Asp-40 and 93-96 (ELAG). Residues Asp-40 and Glu-93 each contribute to the Mg(2+) site.

This sequence belongs to the dethiobiotin synthetase family. Homodimer. Mg(2+) is required as a cofactor.

Its subcellular location is the cytoplasm. It carries out the reaction (7R,8S)-7,8-diammoniononanoate + CO2 + ATP = (4R,5S)-dethiobiotin + ADP + phosphate + 3 H(+). The protein operates within cofactor biosynthesis; biotin biosynthesis; biotin from 7,8-diaminononanoate: step 1/2. Functionally, catalyzes a mechanistically unusual reaction, the ATP-dependent insertion of CO2 between the N7 and N8 nitrogen atoms of 7,8-diaminopelargonic acid (DAPA, also called 7,8-diammoniononanoate) to form a ureido ring. The polypeptide is ATP-dependent dethiobiotin synthetase BioD (Campylobacter jejuni subsp. jejuni serotype O:6 (strain 81116 / NCTC 11828)).